We begin with the raw amino-acid sequence, 33 residues long: Beta/kappa-theraphotoxin-Hlv1a (33 aa).

Intrachain disulfides connect C2–C17, C9–C22, and C16–C29. I33 is subject to Isoleucine amide.

The protein belongs to the neurotoxin 10 (Hwtx-1) family. 11 (haplotoxin-2) subfamily. Expressed by the venom gland.

The protein resides in the secreted. Functionally, spider venom neurotoxin that blocks voltage-gated sodium channel Nav1.3/SCN3A in human (IC(50)=80 nM) and rat (IC(50)=160 nM). Partially inhibits human Kv11.1/KCNH2/ERG (25% at 175 uM). This is Beta/kappa-theraphotoxin-Hlv1a from Cyriopagopus lividus (Cobalt blue tarantula).